A 501-amino-acid polypeptide reads, in one-letter code: Cytochrome P450 3A6 (501 aa).

Cysteine 440 is a heme binding site.

This sequence belongs to the cytochrome P450 family. Heme serves as cofactor.

The protein resides in the endoplasmic reticulum membrane. It is found in the microsome membrane. It carries out the reaction an organic molecule + reduced [NADPH--hemoprotein reductase] + O2 = an alcohol + oxidized [NADPH--hemoprotein reductase] + H2O + H(+). Functionally, exhibits progesterone 6 beta-hydroxylase activity. This chain is Cytochrome P450 3A6 (CYP3A6), found in Oryctolagus cuniculus (Rabbit).